Consider the following 489-residue polypeptide: Aspartate/glutamate permease AcaP (489 aa).

A run of 12 helical transmembrane segments spans residues 6–26 (IRWF…GNVV), 36–56 (VVTS…LIVG), 91–111 (VVHI…FGWV), 122–142 (MSMT…LWLS), 152–172 (IGGL…VMAI), 195–215 (IPKF…AVGG), 238–258 (FLLA…MGMI), 290–310 (LMIV…AFSI), 342–362 (GYTL…LGIG), 373–393 (NLNS…FIML), 413–433 (AMIA…LGMV), and 449–469 (LASN…LPFI).

It belongs to the amino acid-polyamine-organocation (APC) superfamily. Glutamate:GABA antiporter (GGA) (TC 2.A.3.7) family.

It localises to the cell membrane. Functionally, involved in aspartate and glutamate uptake. Plays no significant role in the excretion of accumulated glutamate. The polypeptide is Aspartate/glutamate permease AcaP (Lactococcus lactis subsp. cremoris (strain MG1363)).